The following is a 1151-amino-acid chain: Elicitor of plant defense protein 1 (1151 aa).

Disordered stretches follow at residues 22 to 130, 178 to 197, and 236 to 255; these read YQDP…TLGE, ERIRAEESDSGRLSPLRSIK, and NYNSVIPPPEPLNTDPDMHP. The span at 39–49 shows a compositional bias: acidic residues; it reads IIEDGEPEDEW. Residues 64 to 99 are compositionally biased toward polar residues; it reads QNSASRLSKMSLTERFSIQTLDDTDGNTKSNRSSAT. Over residues 104 to 122 the composition is skewed to low complexity; it reads NPPDFSNGNDDSNGNSQNP. The span at 178–187 shows a compositional bias: basic and acidic residues; it reads ERIRAEESDS. One can recognise a uDENN domain in the interval 242 to 500; that stretch reads PPPEPLNTDP…NLCTEAFNPL (259 aa). The region spanning 524–656 is the cDENN domain; it reads EIPGSRTIDI…ARRKLMSLLQ (133 aa). Positions 658–1019 constitute a dDENN domain; the sequence is AAPHKLRYGV…DREMQPANDA (362 aa). Polar residues-rich tracts occupy residues 695–711 and 744–760; these read STPKSTLGKWVSQSSSG and TSKSGKTSPQSSVSPVS. A disordered region spans residues 695 to 809; the sequence is STPKSTLGKW…SSSFGVDKHP (115 aa). A compositionally biased stretch (basic and acidic residues) spans 784–798; the sequence is LREKRSGHFGEEKMR. The Phorbol-ester/DAG-type zinc-finger motif lies at 886–934; it reads GHCFNYMPKDNTSMCTICNDLAEGDGVYRCTGCKIVSHGRCLGYCSLIC.

It belongs to the EPD1 elicitor family.

The protein resides in the secreted. The protein localises to the host cell. In terms of biological role, acts as an elicitor that triggers cell death and defense responses in the host plants. This is Elicitor of plant defense protein 1 from Gibberella zeae (strain ATCC MYA-4620 / CBS 123657 / FGSC 9075 / NRRL 31084 / PH-1) (Wheat head blight fungus).